The primary structure comprises 184 residues: ATP synthase subunit delta (184 aa).

This sequence belongs to the ATPase delta chain family. F-type ATPases have 2 components, F(1) - the catalytic core - and F(0) - the membrane proton channel. F(1) has five subunits: alpha(3), beta(3), gamma(1), delta(1), epsilon(1). CF(0) has four main subunits: a(1), b(1), b'(1) and c(10-14). The alpha and beta chains form an alternating ring which encloses part of the gamma chain. F(1) is attached to F(0) by a central stalk formed by the gamma and epsilon chains, while a peripheral stalk is formed by the delta, b and b' chains.

The protein resides in the cellular thylakoid membrane. Functionally, f(1)F(0) ATP synthase produces ATP from ADP in the presence of a proton or sodium gradient. F-type ATPases consist of two structural domains, F(1) containing the extramembraneous catalytic core and F(0) containing the membrane proton channel, linked together by a central stalk and a peripheral stalk. During catalysis, ATP synthesis in the catalytic domain of F(1) is coupled via a rotary mechanism of the central stalk subunits to proton translocation. In terms of biological role, this protein is part of the stalk that links CF(0) to CF(1). It either transmits conformational changes from CF(0) to CF(1) or is implicated in proton conduction. In Gloeothece citriformis (strain PCC 7424) (Cyanothece sp. (strain PCC 7424)), this protein is ATP synthase subunit delta.